A 302-amino-acid polypeptide reads, in one-letter code: Sulfate adenylyltransferase subunit 2 (302 aa).

Belongs to the PAPS reductase family. CysD subfamily. Heterodimer composed of CysD, the smaller subunit, and CysN.

It catalyses the reaction sulfate + ATP + H(+) = adenosine 5'-phosphosulfate + diphosphate. It participates in sulfur metabolism; hydrogen sulfide biosynthesis; sulfite from sulfate: step 1/3. Functionally, with CysN forms the ATP sulfurylase (ATPS) that catalyzes the adenylation of sulfate producing adenosine 5'-phosphosulfate (APS) and diphosphate, the first enzymatic step in sulfur assimilation pathway. APS synthesis involves the formation of a high-energy phosphoric-sulfuric acid anhydride bond driven by GTP hydrolysis by CysN coupled to ATP hydrolysis by CysD. This chain is Sulfate adenylyltransferase subunit 2, found in Bacteroides thetaiotaomicron (strain ATCC 29148 / DSM 2079 / JCM 5827 / CCUG 10774 / NCTC 10582 / VPI-5482 / E50).